The sequence spans 494 residues: ATP synthase subunit alpha 1 (494 aa).

The protein belongs to the ATPase alpha/beta chains family. F-type ATPases have 2 components, CF(1) - the catalytic core - and CF(0) - the membrane proton channel. CF(1) has five subunits: alpha(3), beta(3), gamma(1), delta(1), epsilon(1). CF(0) has three main subunits: a(1), b(2) and c(9-12). The alpha and beta chains form an alternating ring which encloses part of the gamma chain. CF(1) is attached to CF(0) by a central stalk formed by the gamma and epsilon chains, while a peripheral stalk is formed by the delta and b chains.

The protein resides in the cell inner membrane. The catalysed reaction is ATP + H2O + 4 H(+)(in) = ADP + phosphate + 5 H(+)(out). Produces ATP from ADP in the presence of a proton gradient across the membrane. The alpha chain is a regulatory subunit. The chain is ATP synthase subunit alpha 1 from Hahella chejuensis (strain KCTC 2396).